The chain runs to 417 residues: NADH-quinone oxidoreductase subunit D (417 aa).

The protein belongs to the complex I 49 kDa subunit family. As to quaternary structure, NDH-1 is composed of 14 different subunits. Subunits NuoB, C, D, E, F, and G constitute the peripheral sector of the complex.

It localises to the cell inner membrane. It catalyses the reaction a quinone + NADH + 5 H(+)(in) = a quinol + NAD(+) + 4 H(+)(out). Its function is as follows. NDH-1 shuttles electrons from NADH, via FMN and iron-sulfur (Fe-S) centers, to quinones in the respiratory chain. The immediate electron acceptor for the enzyme in this species is believed to be ubiquinone. Couples the redox reaction to proton translocation (for every two electrons transferred, four hydrogen ions are translocated across the cytoplasmic membrane), and thus conserves the redox energy in a proton gradient. This chain is NADH-quinone oxidoreductase subunit D, found in Methylobacillus flagellatus (strain ATCC 51484 / DSM 6875 / VKM B-1610 / KT).